The chain runs to 209 residues: HTLV-1 basic zipper factor (209 aa).

The segment at 48–162 is disordered; that stretch reads DGLLSLEEES…SARKEKMQEL (115 aa). 2 stretches are compositionally biased toward basic and acidic residues: residues 70-87 and 94-114; these read APPR…AEEK and REKE…EEKA. A Nuclear localization signal 1 motif is present at residues 87–92; that stretch reads KRKRKK. 2 consecutive short sequence motifs (nuclear localization signal) follow at residues 116–120 and 137–141; these read RRRRA and RRERK. The segment covering 122-160 has biased composition (basic and acidic residues); the sequence is KKAADVARRKQEEQERRERKWRQGAEKAKQHSARKEKMQ.

It belongs to the HTLV-1 HBZ protein family. Interacts with host ATF4; this interaction inhibits viral RNA transcriptional activation by preventing ATF4 binding to Tax-responsive elements. Interacts with host CREB1; this interaction inhibits host CREB1 transcriptional activity. Interacts with host JUN, JUNB and JUND. Interacts with host EP300.

It is found in the host nucleus. Its function is as follows. Contributes to the regulation of viral RNA transcription by interacting with host proteins involved in transcriptional activation such as ATF4, or CREB1, and by inhibiting their activity. Additionally, HBZ suppresses host NF-kappa-B-driven transcription mediated by host RELA as well as transcription of some classical NF-kappa-B target genes, including IL8, IL2RA, IRF4, VCAM1, and VEGFA. The sequence is that of HTLV-1 basic zipper factor (HBZ) from Homo sapiens (Human).